Here is a 455-residue protein sequence, read N- to C-terminus: Probable transcription factor GLK1 (455 aa).

Positions 145–163 (AAVEAKSSSPSSTTSSSQE) are enriched in low complexity. The disordered stretch occupies residues 145-183 (AAVEAKSSSPSSTTSSSQEAESRHKSSSKSSHGKKKAKV). The span at 169–181 (KSSSKSSHGKKKA) shows a compositional bias: basic residues. The HTH myb-type domain maps to 177–236 (GKKKAKVDWTPELHRRFVQAVEQLGIDKAVPSRILEIMGIDSLTRHNIASHLQKYRSHRK). The segment at residues 207–232 (PSRILEIMGIDSLTRHNIASHLQKYR) is a DNA-binding region (H-T-H motif).

Expressed in leaves.

The protein resides in the nucleus. Functionally, probable transcriptional activator that promotes chloroplast development. Acts as an activator of nuclear photosynthetic genes involved in chlorophyll biosynthesis, light harvesting, and electron transport. The protein is Probable transcription factor GLK1 (GLK1) of Oryza sativa subsp. japonica (Rice).